Reading from the N-terminus, the 140-residue chain is Putative nickel-responsive regulator (140 aa).

4 residues coordinate Ni(2+): H81, H92, H94, and C100.

The protein belongs to the transcriptional regulatory CopG/NikR family. It depends on Ni(2+) as a cofactor.

Its function is as follows. Transcriptional regulator. The chain is Putative nickel-responsive regulator from Methanococcoides burtonii (strain DSM 6242 / NBRC 107633 / OCM 468 / ACE-M).